A 94-amino-acid polypeptide reads, in one-letter code: Integration host factor subunit beta (94 aa).

Belongs to the bacterial histone-like protein family. In terms of assembly, heterodimer of an alpha and a beta chain.

Functionally, this protein is one of the two subunits of integration host factor, a specific DNA-binding protein that functions in genetic recombination as well as in transcriptional and translational control. This Pectobacterium atrosepticum (strain SCRI 1043 / ATCC BAA-672) (Erwinia carotovora subsp. atroseptica) protein is Integration host factor subunit beta.